A 1059-amino-acid chain; its full sequence is Carbamoyl phosphate synthase large chain (1059 aa).

The interval 1–401 (MPKRTDIHKI…ALLKAVASLE (401 aa)) is carboxyphosphate synthetic domain. ATP is bound by residues R129, R169, G175, G176, K208, I210, E215, G241, I242, H243, Q284, and E298. Residues 133–327 (KELMQELGEP…IAKLAAKIAV (195 aa)) form the ATP-grasp 1 domain. Mg(2+) is bound by residues Q284, E298, and N300. The Mn(2+) site is built by Q284, E298, and N300. The oligomerization domain stretch occupies residues 402–546 (IDQKDLLSKE…YSTYETENES (145 aa)). Residues 547 to 929 (RRSAKPSVLV…ALYKAFAGAG (383 aa)) are carbamoyl phosphate synthetic domain. The region spanning 671–861 (DQVIKDLNLR…MAQLATKVIL (191 aa)) is the ATP-grasp 2 domain. Residues R707, A746, L748, E752, G777, V778, H779, S780, Q820, and E832 each coordinate ATP. Mg(2+) contacts are provided by Q820, E832, and N834. Q820, E832, and N834 together coordinate Mn(2+). An MGS-like domain is found at 930–1059 (MEVPDNGAVL…EMTSFKTTEL (130 aa)). The allosteric domain stretch occupies residues 930 to 1059 (MEVPDNGAVL…EMTSFKTTEL (130 aa)).

It belongs to the CarB family. As to quaternary structure, composed of two chains; the small (or glutamine) chain promotes the hydrolysis of glutamine to ammonia, which is used by the large (or ammonia) chain to synthesize carbamoyl phosphate. Tetramer of heterodimers (alpha,beta)4. The cofactor is Mg(2+). Requires Mn(2+) as cofactor.

It catalyses the reaction hydrogencarbonate + L-glutamine + 2 ATP + H2O = carbamoyl phosphate + L-glutamate + 2 ADP + phosphate + 2 H(+). It carries out the reaction hydrogencarbonate + NH4(+) + 2 ATP = carbamoyl phosphate + 2 ADP + phosphate + 2 H(+). It participates in amino-acid biosynthesis; L-arginine biosynthesis; carbamoyl phosphate from bicarbonate: step 1/1. The protein operates within pyrimidine metabolism; UMP biosynthesis via de novo pathway; (S)-dihydroorotate from bicarbonate: step 1/3. Functionally, large subunit of the glutamine-dependent carbamoyl phosphate synthetase (CPSase). CPSase catalyzes the formation of carbamoyl phosphate from the ammonia moiety of glutamine, carbonate, and phosphate donated by ATP, constituting the first step of 2 biosynthetic pathways, one leading to arginine and/or urea and the other to pyrimidine nucleotides. The large subunit (synthetase) binds the substrates ammonia (free or transferred from glutamine from the small subunit), hydrogencarbonate and ATP and carries out an ATP-coupled ligase reaction, activating hydrogencarbonate by forming carboxy phosphate which reacts with ammonia to form carbamoyl phosphate. The chain is Carbamoyl phosphate synthase large chain from Limosilactobacillus fermentum (strain NBRC 3956 / LMG 18251) (Lactobacillus fermentum).